Consider the following 129-residue polypeptide: Phosphoribosyl-AMP cyclohydrolase (129 aa).

Residue Asp76 coordinates Mg(2+). Cys77 is a binding site for Zn(2+). The Mg(2+) site is built by Asp78 and Asp80. Zn(2+) is bound by residues Cys97 and Cys104.

Belongs to the PRA-CH family. In terms of assembly, homodimer. Mg(2+) serves as cofactor. It depends on Zn(2+) as a cofactor.

It localises to the cytoplasm. It carries out the reaction 1-(5-phospho-beta-D-ribosyl)-5'-AMP + H2O = 1-(5-phospho-beta-D-ribosyl)-5-[(5-phospho-beta-D-ribosylamino)methylideneamino]imidazole-4-carboxamide. It functions in the pathway amino-acid biosynthesis; L-histidine biosynthesis; L-histidine from 5-phospho-alpha-D-ribose 1-diphosphate: step 3/9. In terms of biological role, catalyzes the hydrolysis of the adenine ring of phosphoribosyl-AMP. This chain is Phosphoribosyl-AMP cyclohydrolase, found in Leptothrix cholodnii (strain ATCC 51168 / LMG 8142 / SP-6) (Leptothrix discophora (strain SP-6)).